The following is a 697-amino-acid chain: Pentatricopeptide repeat-containing protein 1, mitochondrial (697 aa).

Residues 1-36 constitute a mitochondrion transit peptide; that stretch reads MLKRAHYVALHVTLNHNGLSYQRVFSCLTQFPMLRH. PPR repeat units follow at residues 257-288 and 294-328; these read RPFT…VKNK and SDVF…NVNF.

It is found in the mitochondrion. Mitochondrial RNA-binding protein required for the stability of the cox2 and cox3 mRNAs. The protein is Pentatricopeptide repeat-containing protein 1, mitochondrial (ppr1) of Schizosaccharomyces pombe (strain 972 / ATCC 24843) (Fission yeast).